The sequence spans 157 residues: SsrA-binding protein (157 aa).

The interval K132–G157 is disordered. Residues D135–R151 are compositionally biased toward basic and acidic residues.

The protein belongs to the SmpB family.

It localises to the cytoplasm. Required for rescue of stalled ribosomes mediated by trans-translation. Binds to transfer-messenger RNA (tmRNA), required for stable association of tmRNA with ribosomes. tmRNA and SmpB together mimic tRNA shape, replacing the anticodon stem-loop with SmpB. tmRNA is encoded by the ssrA gene; the 2 termini fold to resemble tRNA(Ala) and it encodes a 'tag peptide', a short internal open reading frame. During trans-translation Ala-aminoacylated tmRNA acts like a tRNA, entering the A-site of stalled ribosomes, displacing the stalled mRNA. The ribosome then switches to translate the ORF on the tmRNA; the nascent peptide is terminated with the 'tag peptide' encoded by the tmRNA and targeted for degradation. The ribosome is freed to recommence translation, which seems to be the essential function of trans-translation. The sequence is that of SsrA-binding protein from Rhodopseudomonas palustris (strain ATCC BAA-98 / CGA009).